The chain runs to 32 residues: Kappa-theraphotoxin-Gr2b (32 aa).

Cystine bridges form between Cys-2–Cys-16, Cys-9–Cys-21, and Cys-15–Cys-25.

Belongs to the neurotoxin 30 (phrixotoxin) family. Expressed by the venom gland.

It is found in the secreted. Functionally, binds the voltage-sensor domain of the potassium channel KvAP (from the archaeon Aeropyrum pernix) and affects channel gating. The polypeptide is Kappa-theraphotoxin-Gr2b (Grammostola rosea (Chilean rose tarantula)).